The sequence spans 103 residues: UPF0473 protein LBA0420 (103 aa).

It belongs to the UPF0473 family.

The sequence is that of UPF0473 protein LBA0420 from Lactobacillus acidophilus (strain ATCC 700396 / NCK56 / N2 / NCFM).